The chain runs to 70 residues: Small, acid-soluble spore protein I (70 aa).

It belongs to the SspI family.

The protein localises to the spore core. This chain is Small, acid-soluble spore protein I, found in Bacillus licheniformis (strain ATCC 14580 / DSM 13 / JCM 2505 / CCUG 7422 / NBRC 12200 / NCIMB 9375 / NCTC 10341 / NRRL NRS-1264 / Gibson 46).